Reading from the N-terminus, the 583-residue chain is Aspartate--tRNA ligase (583 aa).

E169 lines the L-aspartate pocket. Residues 193 to 196 form an aspartate region; it reads QLFK. Position 215 (R215) interacts with L-aspartate. Residues 215–217 and Q224 each bind ATP; that span reads RDE. H443 is a binding site for L-aspartate. ATP is bound at residue E477. R484 contacts L-aspartate. Residue 529-532 coordinates ATP; it reads GIDR.

This sequence belongs to the class-II aminoacyl-tRNA synthetase family. Type 1 subfamily. As to quaternary structure, homodimer.

It is found in the cytoplasm. The enzyme catalyses tRNA(Asp) + L-aspartate + ATP = L-aspartyl-tRNA(Asp) + AMP + diphosphate. Functionally, catalyzes the attachment of L-aspartate to tRNA(Asp) in a two-step reaction: L-aspartate is first activated by ATP to form Asp-AMP and then transferred to the acceptor end of tRNA(Asp). In Stenotrophomonas maltophilia (strain K279a), this protein is Aspartate--tRNA ligase.